The primary structure comprises 582 residues: DNA mismatch repair protein MutL (582 aa).

Belongs to the DNA mismatch repair MutL/HexB family.

Its function is as follows. This protein is involved in the repair of mismatches in DNA. It is required for dam-dependent methyl-directed DNA mismatch repair. May act as a 'molecular matchmaker', a protein that promotes the formation of a stable complex between two or more DNA-binding proteins in an ATP-dependent manner without itself being part of a final effector complex. This Buchnera aphidicola subsp. Schizaphis graminum (strain Sg) protein is DNA mismatch repair protein MutL.